Consider the following 479-residue polypeptide: Glycerol kinase 5 (479 aa).

Positions 20 and 21 each coordinate ATP. Glycerol-binding residues include R90, D267, and Q268. Residues T289, G332, and G432 each coordinate ATP.

Belongs to the FGGY kinase family.

It is found in the cytoplasm. The catalysed reaction is glycerol + ATP = sn-glycerol 3-phosphate + ADP + H(+). It functions in the pathway polyol metabolism; glycerol degradation via glycerol kinase pathway; sn-glycerol 3-phosphate from glycerol: step 1/1. Functionally, skin-specific kinase that plays a key role in glycerol metabolism, catalyzing its phosphorylation to produce sn-glycerol 3-phosphate. Involved in skin-specific regulation of sterol regulatory element-binding protein (SREBP) processing and lipid biosynthesis. The protein is Glycerol kinase 5 (gk5) of Xenopus laevis (African clawed frog).